The following is a 115-amino-acid chain: T cell receptor beta variable 7-2 (115 aa).

A signal peptide spans 1–21 (MGTRLLFWVAFCLLGADHTGA). Residues 22-115 (GVSQSPSNKV…SAVYLCASSL (94 aa)) form the Ig-like domain. An intrachain disulfide couples cysteine 42 to cysteine 111.

Alpha-beta TR is a heterodimer composed of an alpha and beta chain; disulfide-linked. The alpha-beta TR is associated with the transmembrane signaling CD3 coreceptor proteins to form the TR-CD3 (TcR or TCR). The assembly of alpha-beta TR heterodimers with CD3 occurs in the endoplasmic reticulum where a single alpha-beta TR heterodimer associates with one CD3D-CD3E heterodimer, one CD3G-CD3E heterodimer and one CD247 homodimer forming a stable octameric structure. CD3D-CD3E and CD3G-CD3E heterodimers preferentially associate with TR alpha and TR beta chains, respectively. The association of the CD247 homodimer is the last step of TcR assembly in the endoplasmic reticulum and is required for transport to the cell surface.

It localises to the cell membrane. Its function is as follows. V region of the variable domain of T cell receptor (TR) beta chain that participates in the antigen recognition. Alpha-beta T cell receptors are antigen specific receptors which are essential to the immune response and are present on the cell surface of T lymphocytes. Recognize peptide-major histocompatibility (MH) (pMH) complexes that are displayed by antigen presenting cells (APC), a prerequisite for efficient T cell adaptive immunity against pathogens. Binding of alpha-beta TR to pMH complex initiates TR-CD3 clustering on the cell surface and intracellular activation of LCK that phosphorylates the ITAM motifs of CD3G, CD3D, CD3E and CD247 enabling the recruitment of ZAP70. In turn ZAP70 phosphorylates LAT, which recruits numerous signaling molecules to form the LAT signalosome. The LAT signalosome propagates signal branching to three major signaling pathways, the calcium, the mitogen-activated protein kinase (MAPK) kinase and the nuclear factor NF-kappa-B (NF-kB) pathways, leading to the mobilization of transcription factors that are critical for gene expression and essential for T cell growth and differentiation. The T cell repertoire is generated in the thymus, by V-(D)-J rearrangement. This repertoire is then shaped by intrathymic selection events to generate a peripheral T cell pool of self-MH restricted, non-autoaggressive T cells. Post-thymic interaction of alpha-beta TR with the pMH complexes shapes TR structural and functional avidity. This Homo sapiens (Human) protein is T cell receptor beta variable 7-2.